A 157-amino-acid chain; its full sequence is 2-C-methyl-D-erythritol 2,4-cyclodiphosphate synthase (157 aa).

A divalent metal cation contacts are provided by D8 and H10. 4-CDP-2-C-methyl-D-erythritol 2-phosphate is bound by residues 8–10 and 34–35; these read DVH and HS. A divalent metal cation is bound at residue H42. 4-CDP-2-C-methyl-D-erythritol 2-phosphate is bound by residues 56 to 58, 132 to 135, and R142; these read DIG and TTNE.

The protein belongs to the IspF family. Homotrimer. A divalent metal cation is required as a cofactor.

The catalysed reaction is 4-CDP-2-C-methyl-D-erythritol 2-phosphate = 2-C-methyl-D-erythritol 2,4-cyclic diphosphate + CMP. It functions in the pathway isoprenoid biosynthesis; isopentenyl diphosphate biosynthesis via DXP pathway; isopentenyl diphosphate from 1-deoxy-D-xylulose 5-phosphate: step 4/6. Involved in the biosynthesis of isopentenyl diphosphate (IPP) and dimethylallyl diphosphate (DMAPP), two major building blocks of isoprenoid compounds. Catalyzes the conversion of 4-diphosphocytidyl-2-C-methyl-D-erythritol 2-phosphate (CDP-ME2P) to 2-C-methyl-D-erythritol 2,4-cyclodiphosphate (ME-CPP) with a corresponding release of cytidine 5-monophosphate (CMP). This chain is 2-C-methyl-D-erythritol 2,4-cyclodiphosphate synthase, found in Prosthecochloris aestuarii (strain DSM 271 / SK 413).